The primary structure comprises 686 residues: Acyl-CoA synthetase short-chain family member 3, mitochondrial (686 aa).

The transit peptide at 1 to 29 (MKPSWLQCHKVTSAGGLGGPLPGSSPARG) directs the protein to the mitochondrion. Residue 227–230 (EPGR) participates in CoA binding. Residues 425-427 (GER) and 446-451 (DHWWQT) contribute to the ATP site. At K518 the chain carries N6-succinyllysine. N6-acetyllysine is present on K524. The ATP site is built by D539, R554, and R565. R624 contributes to the CoA binding site.

It belongs to the ATP-dependent AMP-binding enzyme family.

Its subcellular location is the mitochondrion matrix. The catalysed reaction is acetate + ATP + CoA = acetyl-CoA + AMP + diphosphate. The enzyme catalyses propanoate + ATP + CoA = propanoyl-CoA + AMP + diphosphate. It carries out the reaction butanoate + ATP + CoA = butanoyl-CoA + AMP + diphosphate. Its function is as follows. Catalyzes the synthesis of acetyl-CoA from short-chain fatty acids. Propionate is the preferred substrate but can also utilize acetate and butyrate with a much lower affinity. The sequence is that of Acyl-CoA synthetase short-chain family member 3, mitochondrial (ACSS3) from Pongo abelii (Sumatran orangutan).